The primary structure comprises 468 residues: Monogalactosyldiacylglycerol synthase 2, chloroplastic (468 aa).

UDP is bound by residues histidine 82, arginine 251, 361-365, and glutamate 383; that span reads GTIAE.

It belongs to the glycosyltransferase 28 family. As to expression, expressed mainly in floral buds. Detected in roots, leaves, stems, siliques and pollen tubes.

It localises to the plastid. It is found in the chloroplast outer membrane. It catalyses the reaction a 1,2-diacyl-sn-glycerol + UDP-alpha-D-galactose = a 1,2-diacyl-3-O-(beta-D-galactosyl)-sn-glycerol + UDP + H(+). The catalysed reaction is 1,2-di-(9Z,12Z-octadecadienoyl)-sn-glycerol + UDP-alpha-D-galactose = 1,2-di-(9Z,12Z-octadecadienoyl)-3-beta-D-galactosyl-sn-glycerol + UDP + H(+). It carries out the reaction 1-(9Z-octadecenoyl)-2-hexadecanoyl-sn-glycerol + UDP-alpha-D-galactose = 1-(9Z-octadecenoyl)-2-hexadecanoyl-3-beta-D-galactosyl-sn-glycerol + UDP + H(+). The enzyme catalyses 1,2-di-(9Z-octadecenoyl)-sn-glycerol + UDP-alpha-D-galactose = 1,2-di-(9Z-octadecenoyl)-3-beta-D-galactosyl-sn-glycerol + UDP + H(+). Its activity is regulated as follows. Inhibited by galvestine-1. Its function is as follows. Involved in the synthesis of monogalactosyldiacylglycerol, the major structural component of photosynthetic membranes and in the chloroplast envelope biogenesis. Can use both prokaryotic (18:1/16:0) or eukaryotic (18:2/18:2) 1,2-diacylglycerol species, but operates with some preference for the eukaryotic one. Plays a minor role in galactolipid synthesis in chloroplasts. Is required for membrane lipid remodeling in phosphate-starved roots. Acts as the minor factor involved in digalactosyldiacylglycerol (DGDG) biosynthesis in phosphate-starved roots. Does not seem to be required for plant growth under nutrient-sufficient conditions. Required for membrane lipid remodeling in plants grown in acidic conditions. The chain is Monogalactosyldiacylglycerol synthase 2, chloroplastic from Arabidopsis thaliana (Mouse-ear cress).